The primary structure comprises 166 residues: Phosphodiesterase MJ0936 (166 aa).

Residues Asp-8, His-10, Asp-36, Asn-59, His-97, His-120, and His-122 each coordinate Mn(2+). Ni(2+)-binding residues include Asp-8, His-10, Asp-36, Asn-59, His-97, His-120, and His-122.

Belongs to the metallophosphoesterase superfamily. YfcE family. In terms of assembly, monomer. Ni(2+) is required as a cofactor. Mn(2+) serves as cofactor.

With respect to regulation, competitively inhibited by phosphate. Its function is as follows. Shows phosphodiesterase activity. Hydrolyzes phosphodiesters bonds in the artificial chromogenic substrates bis-p-nitrophenyl phosphate (bis-pNPP), and less efficiently thymidine 5'-monophosphate p-nitrophenyl ester (pNP-TMP) and p-nitrophenylphosphorylcholine (pNPPC). No catalytic activity was found toward cAMP or cGMP, nucleotides or phospholipase substrates such as phosphatidylcholine. The physiological substrate is unknown. The sequence is that of Phosphodiesterase MJ0936 from Methanocaldococcus jannaschii (strain ATCC 43067 / DSM 2661 / JAL-1 / JCM 10045 / NBRC 100440) (Methanococcus jannaschii).